Reading from the N-terminus, the 626-residue chain is tRNA uridine 5-carboxymethylaminomethyl modification enzyme MnmG (626 aa).

13–18 is an FAD binding site; sequence GGGHAG. 273–287 contacts NAD(+); sequence GPRYCPSIEDKIHRF.

This sequence belongs to the MnmG family. In terms of assembly, homodimer. Heterotetramer of two MnmE and two MnmG subunits. It depends on FAD as a cofactor.

Its subcellular location is the cytoplasm. In terms of biological role, NAD-binding protein involved in the addition of a carboxymethylaminomethyl (cmnm) group at the wobble position (U34) of certain tRNAs, forming tRNA-cmnm(5)s(2)U34. This Acinetobacter baylyi (strain ATCC 33305 / BD413 / ADP1) protein is tRNA uridine 5-carboxymethylaminomethyl modification enzyme MnmG.